The chain runs to 163 residues: Thiol peroxidase (163 aa).

The region spanning 16-162 (LQVGDTAHDF…YDAAIAAVKN (147 aa)) is the Thioredoxin domain. Cys58 serves as the catalytic Cysteine sulfenic acid (-SOH) intermediate. A disulfide bridge links Cys58 with Cys92.

It belongs to the peroxiredoxin family. Tpx subfamily. In terms of assembly, homodimer.

It carries out the reaction a hydroperoxide + [thioredoxin]-dithiol = an alcohol + [thioredoxin]-disulfide + H2O. Thiol-specific peroxidase that catalyzes the reduction of hydrogen peroxide and organic hydroperoxides to water and alcohols, respectively. Plays a role in cell protection against oxidative stress by detoxifying peroxides. This chain is Thiol peroxidase, found in Streptococcus gordonii.